Here is a 461-residue protein sequence, read N- to C-terminus: Cysteine--tRNA ligase (461 aa).

Zn(2+) is bound at residue Cys-28. The 'HIGH' region motif lies at 30-40 (ITIYDLCHIGH). Zn(2+) contacts are provided by Cys-209, His-234, and Glu-238. The 'KMSKS' region motif lies at 266–270 (KMSKS). Position 269 (Lys-269) interacts with ATP.

This sequence belongs to the class-I aminoacyl-tRNA synthetase family. As to quaternary structure, monomer. Zn(2+) is required as a cofactor.

Its subcellular location is the cytoplasm. It catalyses the reaction tRNA(Cys) + L-cysteine + ATP = L-cysteinyl-tRNA(Cys) + AMP + diphosphate. This Yersinia pseudotuberculosis serotype O:3 (strain YPIII) protein is Cysteine--tRNA ligase.